Reading from the N-terminus, the 251-residue chain is Probable transcriptional regulatory protein MRA_2631 (251 aa).

The protein belongs to the TACO1 family.

It localises to the cytoplasm. The protein is Probable transcriptional regulatory protein MRA_2631 of Mycobacterium tuberculosis (strain ATCC 25177 / H37Ra).